The following is a 132-amino-acid chain: Translation initiation factor 5A (132 aa).

Lys36 is subject to Hypusine.

The protein belongs to the eIF-5A family.

Its subcellular location is the cytoplasm. Its function is as follows. Functions by promoting the formation of the first peptide bond. The polypeptide is Translation initiation factor 5A (eIF5A) (Caldivirga maquilingensis (strain ATCC 700844 / DSM 13496 / JCM 10307 / IC-167)).